The sequence spans 202 residues: Heat shock 22 kDa protein, mitochondrial (202 aa).

Residues 1–31 constitute a mitochondrion transit peptide; it reads MASSLALKRFLSSGLLSSSFLRPVASSASRS. Residues 94 to 202 form the sHSP domain; that stretch reads VLSAASRRGW…RNNVINVKVD (109 aa).

This sequence belongs to the small heat shock protein (HSP20) family.

The protein resides in the mitochondrion. The sequence is that of Heat shock 22 kDa protein, mitochondrial (HSP22) from Pisum sativum (Garden pea).